A 94-amino-acid polypeptide reads, in one-letter code: Large ribosomal subunit protein eL42 (94 aa).

Positions 11, 14, 70, and 73 each coordinate Zn(2+). The segment at 11-73 (CPYCKKHTIH…IDLRFKCTEC (63 aa)) adopts a C4-type zinc-finger fold.

Belongs to the eukaryotic ribosomal protein eL42 family. In terms of assembly, part of the 50S ribosomal subunit. It depends on Zn(2+) as a cofactor.

Binds to the 23S rRNA. The sequence is that of Large ribosomal subunit protein eL42 from Methanocaldococcus jannaschii (strain ATCC 43067 / DSM 2661 / JAL-1 / JCM 10045 / NBRC 100440) (Methanococcus jannaschii).